The sequence spans 87 residues: DNA-directed RNA polymerase subunit omega (87 aa).

It belongs to the RNA polymerase subunit omega family. The RNAP catalytic core consists of 2 alpha, 1 beta, 1 beta' and 1 omega subunit. When a sigma factor is associated with the core the holoenzyme is formed, which can initiate transcription.

It carries out the reaction RNA(n) + a ribonucleoside 5'-triphosphate = RNA(n+1) + diphosphate. Promotes RNA polymerase assembly. Latches the N- and C-terminal regions of the beta' subunit thereby facilitating its interaction with the beta and alpha subunits. The polypeptide is DNA-directed RNA polymerase subunit omega (Ectopseudomonas mendocina (strain ymp) (Pseudomonas mendocina)).